The chain runs to 242 residues: Phosphoribosylaminoimidazole-succinocarboxamide synthase (242 aa).

It belongs to the SAICAR synthetase family.

The enzyme catalyses 5-amino-1-(5-phospho-D-ribosyl)imidazole-4-carboxylate + L-aspartate + ATP = (2S)-2-[5-amino-1-(5-phospho-beta-D-ribosyl)imidazole-4-carboxamido]succinate + ADP + phosphate + 2 H(+). It participates in purine metabolism; IMP biosynthesis via de novo pathway; 5-amino-1-(5-phospho-D-ribosyl)imidazole-4-carboxamide from 5-amino-1-(5-phospho-D-ribosyl)imidazole-4-carboxylate: step 1/2. In Ehrlichia chaffeensis (strain ATCC CRL-10679 / Arkansas), this protein is Phosphoribosylaminoimidazole-succinocarboxamide synthase.